A 263-amino-acid chain; its full sequence is Hydroxyethylthiazole kinase (263 aa).

M45 serves as a coordination point for substrate. ATP is bound by residues R121 and S167. Residue G194 coordinates substrate.

The protein belongs to the Thz kinase family. Mg(2+) is required as a cofactor.

The catalysed reaction is 5-(2-hydroxyethyl)-4-methylthiazole + ATP = 4-methyl-5-(2-phosphooxyethyl)-thiazole + ADP + H(+). It participates in cofactor biosynthesis; thiamine diphosphate biosynthesis; 4-methyl-5-(2-phosphoethyl)-thiazole from 5-(2-hydroxyethyl)-4-methylthiazole: step 1/1. Catalyzes the phosphorylation of the hydroxyl group of 4-methyl-5-beta-hydroxyethylthiazole (THZ). The chain is Hydroxyethylthiazole kinase from Vibrio parahaemolyticus serotype O3:K6 (strain RIMD 2210633).